Reading from the N-terminus, the 563-residue chain is RUN and FYVE domain-containing protein 4 (563 aa).

Positions 33-166 (TETSAELHRL…VAFNLDLQRP (134 aa)) constitute an RUN domain. 2 disordered regions span residues 176 to 327 (SESR…TTEG) and 375 to 397 (KKSS…MQED). Basic and acidic residues-rich tracts occupy residues 196–205 (GFPEEVRCSR) and 263–284 (ETER…RKFL). Residues 285–295 (ENSTASIQQQR) show a composition bias toward polar residues. Positions 297 to 312 (RAKDVKMQLTGRKVEG) are enriched in basic and acidic residues. Over residues 385 to 396 (EWTGVTSGTMQE) the composition is skewed to polar residues. Residues 421-462 (QAQCQEQLRAQEAELQALQEQLSRCQKERALLQVKLEQKQQE) are a coiled coil. The segment at 428–558 (LRAQEAELQA…RCCPTCAQQE (131 aa)) adopts an FYVE-type zinc-finger fold. Residues cysteine 513, cysteine 516, cysteine 529, cysteine 532, cysteine 537, cysteine 540, cysteine 551, and cysteine 554 each coordinate Zn(2+).

In terms of assembly, forms homodimers (via coiled coil domain). Forms a ternary complex with RAB7A and LAMP2; the interaction with RAB7A is mediated by RUFY4 (via RUN and coiled coil domains). Interacts with GTP-, but not GDP-bound ARL8A and ARL8B. Interacts with dynactin/DCTN1 and the dynein intermediate chain DYNC1I1/2. As to expression, expressed in dendritic cells.

Its subcellular location is the cytoplasmic vesicle. The protein localises to the autophagosome. It localises to the lysosome. In terms of biological role, ARL8 effector that promotes the coupling of endolysosomes to dynein-dynactin for retrograde transport along microtubules. Acts by binding both GTP-bound ARL8 and dynein-dynactin. In nonneuronal cells, promotes concentration of endolysosomes in the juxtanuclear area. In hippocampal neurons, drives retrograde transport of endolysosomes from the axon to the soma. Positive regulator of macroautophagy in dendritic cells. Increases autophagic flux, probably by stimulating both autophagosome formation and facilitating tethering with lysosomes. Binds to phosphatidylinositol 3-phosphate (PtdIns3P) through its FYVE-type zinc finger. Positive regulator of osteosclast bone-resorbing activity, possibly by promoting late endosome-lysosome fusion by acting as an adapter protein between RAB7A on late endosomes and LAMP2 on primary lysosomes. This chain is RUN and FYVE domain-containing protein 4 (Rufy4), found in Mus musculus (Mouse).